The sequence spans 538 residues: Probable bifunctional riboflavin biosynthesis protein RIBA 1, chloroplastic (538 aa).

Residues 1–16 (MSRLSSIYSQHRTSGL) show a composition bias toward polar residues. The interval 1–29 (MSRLSSIYSQHRTSGLRSDRSIMPNSTSN) is disordered. Residues 1-73 (MSRLSSIYSQ…NGQASPSKVV (73 aa)) constitute a chloroplast transit peptide. The segment at 46-311 (RNFHISHAVG…IADLIRYRRK (266 aa)) is DHBP synthase. Residues 134 to 135 (RE), Asp-139, 249 to 253 (RAGHT), and Glu-273 contribute to the D-ribulose 5-phosphate site. Glu-135 serves as a coordination point for Mg(2+). His-252 serves as a coordination point for Mg(2+). The interval 312–530 (RDRLVERVCV…DGGIKKEQDQ (219 aa)) is GTP cyclohydrolase II. 362 to 366 (RVHSE) contacts GTP. Positions 367, 378, and 380 each coordinate Zn(2+). Residues Gln-383, 406-408 (EGR), and Thr-428 contribute to the GTP site. The active-site Proton acceptor; for GTP cyclohydrolase activity is the Asp-440. Arg-442 acts as the Nucleophile; for GTP cyclohydrolase activity in catalysis. Residues Thr-463 and Lys-468 each coordinate GTP. A disordered region spans residues 506 to 538 (HVYGTRPSGNTSTLADGGIKKEQDQIDSASEQE).

This sequence in the N-terminal section; belongs to the DHBP synthase family. It in the C-terminal section; belongs to the GTP cyclohydrolase II family. Mg(2+) serves as cofactor. It depends on Mn(2+) as a cofactor. Requires Zn(2+) as cofactor.

The protein localises to the plastid. The protein resides in the chloroplast. It catalyses the reaction D-ribulose 5-phosphate = (2S)-2-hydroxy-3-oxobutyl phosphate + formate + H(+). It carries out the reaction GTP + 4 H2O = 2,5-diamino-6-hydroxy-4-(5-phosphoribosylamino)-pyrimidine + formate + 2 phosphate + 3 H(+). Its pathway is cofactor biosynthesis; riboflavin biosynthesis; 2-hydroxy-3-oxobutyl phosphate from D-ribulose 5-phosphate: step 1/1. It participates in cofactor biosynthesis; riboflavin biosynthesis; 5-amino-6-(D-ribitylamino)uracil from GTP: step 1/4. Its function is as follows. Involved in riboflavin biosynthesis. Catalyzes both the conversion of D-ribulose 5-phosphate to formate and 3,4-dihydroxy-2-butanone 4-phosphate and the conversion of GTP to 2,5-diamino-6-ribosylamino-4(3H)-pyrimidinone 5'-phosphate (DARP), formate and pyrophosphate. In Oryza sativa subsp. japonica (Rice), this protein is Probable bifunctional riboflavin biosynthesis protein RIBA 1, chloroplastic (RIBA1).